Reading from the N-terminus, the 233-residue chain is Large ribosomal subunit protein uL1 (233 aa).

It belongs to the universal ribosomal protein uL1 family. As to quaternary structure, part of the 50S ribosomal subunit.

Binds directly to 23S rRNA. The L1 stalk is quite mobile in the ribosome, and is involved in E site tRNA release. Functionally, protein L1 is also a translational repressor protein, it controls the translation of the L11 operon by binding to its mRNA. In Thermotoga maritima (strain ATCC 43589 / DSM 3109 / JCM 10099 / NBRC 100826 / MSB8), this protein is Large ribosomal subunit protein uL1.